Consider the following 660-residue polypeptide: Putative ABC transporter ATP-binding MG390 homolog (660 aa).

Residues glutamine 6–valine 126 form the Peptidase C39 domain. Cysteine 12 is a catalytic residue. Transmembrane regions (helical) follow at residues leucine 150 to threonine 170, isoleucine 188 to leucine 208, histidine 265 to isoleucine 285, phenylalanine 290 to phenylalanine 310, serine 379 to glutamate 399, and tyrosine 402 to threonine 422. Residues isoleucine 464–threonine 660 form the ABC transporter domain. Residue glycine 494–serine 501 coordinates ATP.

The protein belongs to the ABC transporter superfamily.

It is found in the cell membrane. The protein is Putative ABC transporter ATP-binding MG390 homolog of Mycoplasma pneumoniae (strain ATCC 29342 / M129 / Subtype 1) (Mycoplasmoides pneumoniae).